The following is a 263-amino-acid chain: Post-GPI attachment to proteins factor 2 (263 aa).

6 helical membrane passes run 16 to 36, 69 to 89, 109 to 129, 143 to 163, 180 to 200, and 208 to 228; these read FVIC…ILSL, YIWR…AIAF, FLCN…LALT, CFGG…WLFN, YKIL…YLYW, and PGIY…NIFF.

This sequence belongs to the PGAP2 family.

It is found in the golgi apparatus membrane. It localises to the endoplasmic reticulum membrane. In terms of biological role, involved in the lipid remodeling steps of GPI-anchor maturation. Required for stable expression of GPI-anchored proteins at the cell surface. In Caenorhabditis elegans, this protein is Post-GPI attachment to proteins factor 2.